Here is a 348-residue protein sequence, read N- to C-terminus: Alanine racemase (348 aa).

K34 acts as the Proton acceptor; specific for D-alanine in catalysis. N6-(pyridoxal phosphate)lysine is present on K34. R127 contributes to the substrate binding site. The active-site Proton acceptor; specific for L-alanine is the Y243. M291 contributes to the substrate binding site.

The protein belongs to the alanine racemase family. The cofactor is pyridoxal 5'-phosphate.

It carries out the reaction L-alanine = D-alanine. It functions in the pathway amino-acid biosynthesis; D-alanine biosynthesis; D-alanine from L-alanine: step 1/1. In terms of biological role, catalyzes the interconversion of L-alanine and D-alanine. May also act on other amino acids. The chain is Alanine racemase (alr) from Coprothermobacter proteolyticus (strain ATCC 35245 / DSM 5265 / OCM 4 / BT).